The primary structure comprises 412 residues: Transcription factor IIIA (412 aa).

Residues 1-20 (MSESDETKSISSLISSSSSS) are disordered. The segment covering 9 to 20 (SISSLISSSSSS) has biased composition (low complexity). 7 C2H2-type zinc fingers span residues 25–49 (YICT…LRTH), 55–79 (YKCT…IVSH), 85–107 (FHCS…EITH), 111–136 (FKCT…LSVH), 140–162 (LTCK…KLKH), 169–194 (YQCD…KQSH), and 197–219 (LKCP…MLSH). The C2H2-type 8; degenerate zinc-finger motif lies at 228–252 (WTCDYCDVGKFAKKNELVEHYNIFH). Residues 285–316 (LETEKLKVEEDEEDEEDSLDEKRSDVRSDSMS) are disordered. Acidic residues predominate over residues 293-303 (EEDEEDEEDSL). Residues 345–369 (INCPKNNCDRMFSREYDLRRHLKWH) form a C2H2-type 9 zinc finger.

The protein resides in the nucleus. Transcription factor required for transcription of 5S rRNA by RNA polymerase III. The polypeptide is Transcription factor IIIA (PZF1) (Candida albicans (strain SC5314 / ATCC MYA-2876) (Yeast)).